The chain runs to 393 residues: MQTSHYAAEKDMQDAVPRLTFTLRDEERLMMKIGVFVPIGNNGWLISTHAPQYMPTFELNKAIVQKAEHYHFDFALSMIKLRGFGGKTEFWDHNLESFTLMAGLAAVTSRIQIYATAATLTLPPAIVARMAATIDSISGGRFGVNLVTGWQKPEYEQMGIWPGDDYFSRRYDYLTEYVQVLRDLWGTGKSDFKGDFFTMNDCRVSPQPSVPMKVICAGQSDAGMAFSAQYADFNFCFGKGVNTPTAFAPTAARMKQAAEQTGRDVGSYVLFMVIADETDDAARAKWEHYKAGADEEALSWLTEQSQKDTRSGTDTNVRQMADPTSAVNINMGTLVGSYASVARMLDEVASVPGAEGVLLTFDDFLSGIETFGERIQPLMQCRAHLPVLTQEVA.

FMN is bound by residues 79-80 (IK), asparagine 145, glutamate 154, 170-171 (RY), and serine 220.

This sequence belongs to the NtaA/SnaA/DszA monooxygenase family. RutA subfamily.

The enzyme catalyses uracil + FMNH2 + NADH + O2 = (Z)-3-ureidoacrylate + FMN + NAD(+) + H2O + H(+). It carries out the reaction thymine + FMNH2 + NADH + O2 = (Z)-2-methylureidoacrylate + FMN + NAD(+) + H2O + H(+). Catalyzes the pyrimidine ring opening between N-3 and C-4 by an unusual flavin hydroperoxide-catalyzed mechanism, adding oxygen atoms in the process to yield ureidoacrylate peracid, that immediately reacts with FMN forming ureidoacrylate and FMN-N(5)-oxide. The FMN-N(5)-oxide reacts spontaneously with NADH to produce FMN. Requires the flavin reductase RutF to regenerate FMN in vivo. This chain is Pyrimidine monooxygenase RutA, found in Escherichia coli O9:H4 (strain HS).